The primary structure comprises 397 residues: Serpin B10 (397 aa).

The Nuclear localization signal motif lies at K74 to K77.

The protein belongs to the serpin family. Ov-serpin subfamily.

Its subcellular location is the nucleus. It is found in the cytoplasm. Protease inhibitor that may play a role in the regulation of protease activities during hematopoiesis and apoptosis induced by TNF. May regulate protease activities in the cytoplasm and in the nucleus. This chain is Serpin B10 (SERPINB10), found in Bos taurus (Bovine).